A 409-amino-acid polypeptide reads, in one-letter code: NADH-quinone oxidoreductase subunit D (409 aa).

Belongs to the complex I 49 kDa subunit family. In terms of assembly, NDH-1 is composed of 14 different subunits. Subunits NuoB, C, D, E, F, and G constitute the peripheral sector of the complex.

It is found in the cell inner membrane. The catalysed reaction is a quinone + NADH + 5 H(+)(in) = a quinol + NAD(+) + 4 H(+)(out). Functionally, NDH-1 shuttles electrons from NADH, via FMN and iron-sulfur (Fe-S) centers, to quinones in the respiratory chain. The immediate electron acceptor for the enzyme in this species is believed to be ubiquinone. Couples the redox reaction to proton translocation (for every two electrons transferred, four hydrogen ions are translocated across the cytoplasmic membrane), and thus conserves the redox energy in a proton gradient. This Helicobacter pylori (strain P12) protein is NADH-quinone oxidoreductase subunit D.